A 101-amino-acid polypeptide reads, in one-letter code: UPF0213 protein lp_2058 (101 aa).

In terms of domain architecture, GIY-YIG spans Lys15–Lys92.

It belongs to the UPF0213 family.

The sequence is that of UPF0213 protein lp_2058 from Lactiplantibacillus plantarum (strain ATCC BAA-793 / NCIMB 8826 / WCFS1) (Lactobacillus plantarum).